Consider the following 92-residue polypeptide: YcgL domain-containing protein Sbal_1869 (92 aa).

Positions 1–85 (MLCAVYKSSR…PQVNLLAEHK (85 aa)) constitute a YcgL domain.

In Shewanella baltica (strain OS155 / ATCC BAA-1091), this protein is YcgL domain-containing protein Sbal_1869.